A 340-amino-acid chain; its full sequence is MLAFRKARRKLRMGTICSPNPSGTKTASEVCNADWMASLPAHLHNVPLSNLAIPGSHDSFSYWVDEKSPVGPDQTQAVIRLARISLVKKLMKKWSVTQNLTFREQLEAGIRYFDLRVSSKPGDTDQEIYFIHGLFGIKVWDGLMEIDAFLTQHPQEIIFLDFNHFYAMDESHHKCLVLRIQEAFGNKLCPACSVESMTLRSLWEKKYQVLIFYHCPFYKQYPFLWPGKKIPAPWANTTSVQKLILFLETTLSERAPRGAFHVSQAILTPRVKTIARGLVGGLKNTLVHRNLPAILDWVKTQKPGAMGVNIITSDFVDLIDFATTVIELNDLLEDRALTKC.

The 174-residue stretch at histidine 42 to cysteine 215 folds into the PI-PLC X-box domain. Catalysis depends on residues histidine 57 and histidine 132.

As to expression, expressed at highest levels in brain, followed by stomach and small intestine. Detected at low levels in kidney, ey, thymus and slkeletal muscle.

It localises to the nucleus. It carries out the reaction a 1,2-diacyl-sn-glycero-3-phospho-(1D-myo-inositol) + H2O = 1D-myo-inositol 1-phosphate + a 1,2-diacyl-sn-glycerol + H(+). In terms of biological role, catalyzes the hydrolysis of inositol from phosphatidylinositol (1,2-diacyl-sn-glycero-3-phospho-(1D-myo-inositol), PI). Could also hydrolyze various multi-phosphorylated derivatives of PI, such as phosphatidylinositol-4,5 bisphosphate (PIP2), releasing inositol-1,4,5-trisphosphate (IP3) and the protein kinase C activator diacylglycerol (DAG), therefore mediating cell signaling. The protein is PI-PLC X domain-containing protein 2 (Plcxd2) of Mus musculus (Mouse).